Consider the following 214-residue polypeptide: 3,4-dihydroxy-2-butanone 4-phosphate synthase (214 aa).

D-ribulose 5-phosphate is bound by residues 37 to 38 (RE), Asp42, 150 to 154 (RPGHT), and Glu174. Residue Glu38 coordinates Mg(2+). Residue His153 participates in Mg(2+) binding.

Belongs to the DHBP synthase family. Homodimer. Requires Mg(2+) as cofactor. Mn(2+) serves as cofactor.

It catalyses the reaction D-ribulose 5-phosphate = (2S)-2-hydroxy-3-oxobutyl phosphate + formate + H(+). It participates in cofactor biosynthesis; riboflavin biosynthesis; 2-hydroxy-3-oxobutyl phosphate from D-ribulose 5-phosphate: step 1/1. Functionally, catalyzes the conversion of D-ribulose 5-phosphate to formate and 3,4-dihydroxy-2-butanone 4-phosphate. The chain is 3,4-dihydroxy-2-butanone 4-phosphate synthase from Mannheimia succiniciproducens (strain KCTC 0769BP / MBEL55E).